The sequence spans 1338 residues: Aldehyde oxidase (1338 aa).

One can recognise a 2Fe-2S ferredoxin-type domain in the interval 5-92 (SELLFYVNGR…GAAVTTVEGI (88 aa)). [2Fe-2S] cluster contacts are provided by Cys-44, Cys-49, Cys-52, and Cys-74. Residue Gln-113 coordinates Mo-molybdopterin. [2Fe-2S] cluster is bound by residues Cys-114, Cys-117, Cys-149, and Cys-151. Cys-151 serves as a coordination point for Mo-molybdopterin. The FAD-binding PCMH-type domain occupies 236 to 421 (FGSERMMWFS…VSVNIPYSRK (186 aa)). FAD is bound by residues 264-271 (VIMGNTSV), Ala-345, Ser-354, His-358, Asp-367, and Leu-411. Residues 806–807 (AF) and Met-1047 contribute to the Mo-molybdopterin site. The residue at position 1068 (Ser-1068) is a Phosphoserine. Residues 1088–1091 (GSVV), Gln-1203, and Leu-1268 each bind Mo-molybdopterin. Glu-1270 functions as the Proton acceptor; for azaheterocycle hydroxylase activity in the catalytic mechanism.

Belongs to the xanthine dehydrogenase family. In terms of assembly, homodimer. Requires [2Fe-2S] cluster as cofactor. FAD is required as a cofactor. It depends on Mo-molybdopterin as a cofactor. Abundant in liver, expressed in adipose tissue and at lower levels in lung, skeletal muscle, pancreas. In contrast to mice, no significant gender difference in AOX1 expression level (at protein level).

The protein localises to the cytoplasm. The catalysed reaction is an aldehyde + O2 + H2O = a carboxylate + H2O2 + H(+). The enzyme catalyses retinal + O2 + H2O = retinoate + H2O2 + H(+). Is very potently inhibited by raloxifene. Also inhibited by estradiol, ethinyl estradiol, hydralazine, menadione, isovanillin and thioridazine. Not inhibited by allopurinol, a xanthine dehydrogenase potent inhibitor. Functionally, oxidase with broad substrate specificity, oxidizing aromatic azaheterocycles, such as N1-methylnicotinamide, N-methylphthalazinium and phthalazine, as well as aldehydes, such as benzaldehyde, retinal, pyridoxal, and vanillin. Plays a key role in the metabolism of xenobiotics and drugs containing aromatic azaheterocyclic substituents. Participates in the bioactivation of prodrugs such as famciclovir, catalyzing the oxidation step from 6-deoxypenciclovir to penciclovir, which is a potent antiviral agent. Is probably involved in the regulation of reactive oxygen species homeostasis. May be a prominent source of superoxide generation via the one-electron reduction of molecular oxygen. May also catalyze nitric oxide (NO) production via the reduction of nitrite to NO with NADH or aldehyde as electron donor. May play a role in adipogenesis. The polypeptide is Aldehyde oxidase (Homo sapiens (Human)).